The sequence spans 294 residues: 4-hydroxy-tetrahydrodipicolinate synthase (294 aa).

Thr47 serves as a coordination point for pyruvate. Tyr135 serves as the catalytic Proton donor/acceptor. Lys163 (schiff-base intermediate with substrate) is an active-site residue. Thr205 contributes to the pyruvate binding site.

Belongs to the DapA family. In terms of assembly, homotetramer; dimer of dimers.

Its subcellular location is the cytoplasm. It carries out the reaction L-aspartate 4-semialdehyde + pyruvate = (2S,4S)-4-hydroxy-2,3,4,5-tetrahydrodipicolinate + H2O + H(+). It participates in amino-acid biosynthesis; L-lysine biosynthesis via DAP pathway; (S)-tetrahydrodipicolinate from L-aspartate: step 3/4. In terms of biological role, catalyzes the condensation of (S)-aspartate-beta-semialdehyde [(S)-ASA] and pyruvate to 4-hydroxy-tetrahydrodipicolinate (HTPA). This Rickettsia africae (strain ESF-5) protein is 4-hydroxy-tetrahydrodipicolinate synthase.